The chain runs to 318 residues: Transaldolase (318 aa).

Lys-132 (schiff-base intermediate with substrate) is an active-site residue.

Belongs to the transaldolase family. Type 1 subfamily. As to quaternary structure, homodimer.

It localises to the cytoplasm. The catalysed reaction is D-sedoheptulose 7-phosphate + D-glyceraldehyde 3-phosphate = D-erythrose 4-phosphate + beta-D-fructose 6-phosphate. Its pathway is carbohydrate degradation; pentose phosphate pathway; D-glyceraldehyde 3-phosphate and beta-D-fructose 6-phosphate from D-ribose 5-phosphate and D-xylulose 5-phosphate (non-oxidative stage): step 2/3. Its function is as follows. Transaldolase is important for the balance of metabolites in the pentose-phosphate pathway. The sequence is that of Transaldolase from Shewanella sediminis (strain HAW-EB3).